We begin with the raw amino-acid sequence, 674 residues long: L-type lectin-domain containing receptor kinase SIT1 (674 aa).

The N-terminal stretch at 1 to 27 is a signal peptide; sequence MRRPELIMRSLPLILFLSLGSFHLAAA. The Extracellular segment spans residues 28–301; sequence AVDDQFTFDG…IARAPSNVLK (274 aa). The segment at 31 to 275 is legume-lectin like; it reads DQFTFDGFAG…VLAWSFKMDG (245 aa). N42, N61, N143, N196, N219, N240, and N281 each carry an N-linked (GlcNAc...) asparagine glycan. The chain crosses the membrane as a helical span at residues 302 to 322; the sequence is ILLPIASAALVSALAIAVLVI. Over 323–674 the chain is Cytoplasmic; that stretch reads HRRRRRYAEL…GNISDIPRAR (352 aa). One can recognise a Protein kinase domain in the interval 357–636; that stretch reads FSDERLLGFG…LDGAMPLPEL (280 aa). ATP contacts are provided by residues 363-371 and K386; that span reads LGFGGFGRV. Catalysis depends on D482, which acts as the Proton acceptor. Phosphothreonine is present on residues T511, T515, T516, and T521.

This sequence in the C-terminal section; belongs to the protein kinase superfamily. Ser/Thr protein kinase family. In the N-terminal section; belongs to the leguminous lectin family. In terms of assembly, interacts with B'KAPPA. Autophosphorylated at Thr-511, Thr-515 or Thr-516, and Thr-521 in response to salt stress. Dephosphorylated by phosphatase 2A in response to salt stress. In terms of tissue distribution, expressed in root epidermal cells.

Its subcellular location is the cell membrane. It catalyses the reaction L-seryl-[protein] + ATP = O-phospho-L-seryl-[protein] + ADP + H(+). The catalysed reaction is L-threonyl-[protein] + ATP = O-phospho-L-threonyl-[protein] + ADP + H(+). Its activity is regulated as follows. Activated by autophosphorylation in response to salt stress. Lectin-domain containing receptor kinase involved in salt stress response. Acts as a negative regulator of salt tolerance. Mediates salt sensitivity by phosphorylating and activating MPK3 and MPK6. Promotes ethylene production and mediates salt-induced ethylene signaling. Promotes the accumulation of reactive oxygen species (ROS) under salt stress conditions. Its kinase activity is triggered by salt stress and is required for its function in salt stress response. Phosphorylates B'KAPPA, a B regulatory subunit of phosphatase 2A (PP2A). This Oryza sativa subsp. japonica (Rice) protein is L-type lectin-domain containing receptor kinase SIT1.